The following is a 387-amino-acid chain: Chaperone protein DnaJ (387 aa).

The 66-residue stretch at 5-70 (DYYEVLGLQK…DKKAKYDQFG (66 aa)) folds into the J domain. A CR-type zinc finger spans residues 144-226 (GCEKEISITR…CKGKGTVRKN (83 aa)). Positions 157, 160, 174, 177, 200, 203, 214, and 217 each coordinate Zn(2+). CXXCXGXG motif repeat units follow at residues 157–164 (CETCHGTG), 174–181 (CPKCNGSG), 200–207 (CDQCGGTG), and 214–221 (CPDCKGKG).

This sequence belongs to the DnaJ family. As to quaternary structure, homodimer. Zn(2+) serves as cofactor.

The protein resides in the cytoplasm. Its function is as follows. Participates actively in the response to hyperosmotic and heat shock by preventing the aggregation of stress-denatured proteins and by disaggregating proteins, also in an autonomous, DnaK-independent fashion. Unfolded proteins bind initially to DnaJ; upon interaction with the DnaJ-bound protein, DnaK hydrolyzes its bound ATP, resulting in the formation of a stable complex. GrpE releases ADP from DnaK; ATP binding to DnaK triggers the release of the substrate protein, thus completing the reaction cycle. Several rounds of ATP-dependent interactions between DnaJ, DnaK and GrpE are required for fully efficient folding. Also involved, together with DnaK and GrpE, in the DNA replication of plasmids through activation of initiation proteins. This chain is Chaperone protein DnaJ, found in Clostridium perfringens (strain 13 / Type A).